The primary structure comprises 144 residues: uncharacterized protein (144 aa).

This is an uncharacterized protein from Vibrio parahaemolyticus serotype O3:K6 (strain RIMD 2210633).